We begin with the raw amino-acid sequence, 422 residues long: Probable D-serine dehydratase (422 aa).

Lys105 bears the N6-(pyridoxal phosphate)lysine mark.

Belongs to the serine/threonine dehydratase family. DsdA subfamily. Pyridoxal 5'-phosphate serves as cofactor.

It catalyses the reaction D-serine = pyruvate + NH4(+). This Carboxydothermus hydrogenoformans (strain ATCC BAA-161 / DSM 6008 / Z-2901) protein is Probable D-serine dehydratase.